The primary structure comprises 359 residues: GDSL esterase/lipase At2g30310 (359 aa).

Residues 1-28 (MSTSKTIVFGLFVATLLVSCNVAANATT) form the signal peptide. The Nucleophile role is filled by Ser41. Asn103 and Asn325 each carry an N-linked (GlcNAc...) asparagine glycan. Residues Asp333 and His336 contribute to the active site.

The protein belongs to the 'GDSL' lipolytic enzyme family.

The protein localises to the secreted. This is GDSL esterase/lipase At2g30310 from Arabidopsis thaliana (Mouse-ear cress).